Here is a 294-residue protein sequence, read N- to C-terminus: Acetylglutamate kinase (294 aa).

Substrate is bound by residues 60–61 (GG), Arg82, and Asn186.

The protein belongs to the acetylglutamate kinase family. ArgB subfamily.

It is found in the cytoplasm. It carries out the reaction N-acetyl-L-glutamate + ATP = N-acetyl-L-glutamyl 5-phosphate + ADP. The protein operates within amino-acid biosynthesis; L-arginine biosynthesis; N(2)-acetyl-L-ornithine from L-glutamate: step 2/4. In terms of biological role, catalyzes the ATP-dependent phosphorylation of N-acetyl-L-glutamate. In Methanospirillum hungatei JF-1 (strain ATCC 27890 / DSM 864 / NBRC 100397 / JF-1), this protein is Acetylglutamate kinase.